The sequence spans 421 residues: Serine hydroxymethyltransferase (421 aa).

Residues L121 and 125-127 (GHL) contribute to the (6S)-5,6,7,8-tetrahydrofolate site. K229 is modified (N6-(pyridoxal phosphate)lysine).

This sequence belongs to the SHMT family. Homodimer. Requires pyridoxal 5'-phosphate as cofactor.

Its subcellular location is the cytoplasm. The catalysed reaction is (6R)-5,10-methylene-5,6,7,8-tetrahydrofolate + glycine + H2O = (6S)-5,6,7,8-tetrahydrofolate + L-serine. The protein operates within one-carbon metabolism; tetrahydrofolate interconversion. Its pathway is amino-acid biosynthesis; glycine biosynthesis; glycine from L-serine: step 1/1. Functionally, catalyzes the reversible interconversion of serine and glycine with tetrahydrofolate (THF) serving as the one-carbon carrier. This reaction serves as the major source of one-carbon groups required for the biosynthesis of purines, thymidylate, methionine, and other important biomolecules. Also exhibits THF-independent aldolase activity toward beta-hydroxyamino acids, producing glycine and aldehydes, via a retro-aldol mechanism. The protein is Serine hydroxymethyltransferase of Actinobacillus pleuropneumoniae serotype 5b (strain L20).